The chain runs to 279 residues: Undecaprenyl-diphosphatase (279 aa).

8 helical membrane-spanning segments follow: residues 1 to 21, 39 to 59, 96 to 116, 128 to 148, 155 to 175, 201 to 221, 231 to 251, and 259 to 279; these read MVLE…LPIS, GRFF…LYFF, LLLV…VRFV, FTMG…DALF, IFQI…FAII, FSFL…LVAG, YSLI…SALL, and FVLF…VSFF.

This sequence belongs to the UppP family.

The protein localises to the cell membrane. It carries out the reaction di-trans,octa-cis-undecaprenyl diphosphate + H2O = di-trans,octa-cis-undecaprenyl phosphate + phosphate + H(+). Functionally, catalyzes the dephosphorylation of undecaprenyl diphosphate (UPP). Confers resistance to bacitracin. This Tropheryma whipplei (strain Twist) (Whipple's bacillus) protein is Undecaprenyl-diphosphatase.